A 478-amino-acid polypeptide reads, in one-letter code: Monocarboxylate transporter 2 (478 aa).

Residues 1-15 (MPPMPSAPPVHPPPD) lie on the Cytoplasmic side of the membrane. The helical transmembrane segment at 16-36 (GGWGWIVVGAAFISIGFSYAF) threads the bilayer. Residues 37-59 (PKAVTVFFKEIQQIFHTTYSEIA) lie on the Extracellular side of the membrane. Residues 60–80 (WISSIMLAVMYAGGPVSSVLV) traverse the membrane as a helical segment. The Cytoplasmic segment spans residues 81-89 (NKYGSRPVV). A helical transmembrane segment spans residues 90–110 (IAGGLLCCLGMVLASFSSSVV). Topologically, residues 111–115 (QLYLT) are extracellular. Residues 116–136 (MGFITGLGLAFNLQPALTIIG) form a helical membrane-spanning segment. Residues 137 to 148 (KYFYRKRPMANG) are Cytoplasmic-facing. The chain crosses the membrane as a helical span at residues 149-169 (LAMAGSPVFLSSLAPFNQYLF). Residues 170–173 (NTFG) lie on the Extracellular side of the membrane. Residues 174-194 (WKGSFLILGSLLLNACVAGSL) traverse the membrane as a helical segment. At 195–246 (MRPLGPNQTTSKSKNKTGKTEDDSSPKKIKTKKSTWEKVNKYLDFSLFKHRG) the chain is on the cytoplasmic side. The interval 200–224 (PNQTTSKSKNKTGKTEDDSSPKKIK) is disordered. A helical membrane pass occupies residues 247 to 267 (FLIYLSGNVIMFLGFFAPIIF). Residues 268-282 (LAPYAKDQGIDEYSA) lie on the Extracellular side of the membrane. A helical membrane pass occupies residues 283–303 (AFLLSVMAFVDMFARPSVGLI). At 304-312 (ANSKYIRPR) the chain is on the cytoplasmic side. Residues 313–333 (IQYFFSFAIMFNGVCHLLCPL) traverse the membrane as a helical segment. The Extracellular portion of the chain corresponds to 334 to 338 (AQDYT). Residues 339–359 (SLVLYAVFFGLGFGSVSSVLF) form a helical membrane-spanning segment. Topologically, residues 360–373 (ETLMDLVGAPRFSS) are cytoplasmic. A helical membrane pass occupies residues 374-394 (AVGLVTIVECGPVLLGPPLAG). The Extracellular portion of the chain corresponds to 395–406 (KLVDLTGEYKYM). The chain crosses the membrane as a helical span at residues 407-427 (YMSCGAIVVAASVWLLIGNAI). The Cytoplasmic portion of the chain corresponds to 428–478 (NYRLLAKERKEENARQKTRESEPLSKSKHSEDVNVKVSNAQSVTSERETNI). Residues 437 to 461 (KEENARQKTRESEPLSKSKHSEDVN) show a composition bias toward basic and acidic residues. The tract at residues 437–478 (KEENARQKTRESEPLSKSKHSEDVNVKVSNAQSVTSERETNI) is disordered.

The protein belongs to the major facilitator superfamily. Monocarboxylate porter (TC 2.A.1.13) family. Homodimer. Interacts with GRID2IP. Interacts with EMB; interaction mediates SLC16A7 targeting to the plasma membrane. Interacts with isoform 2 of BSG. In terms of tissue distribution, detected in heart and in blood lymphocytes and monocytes (at protein level). High expression in testis, moderate to low in spleen, heart, kidney, pancreas, skeletal muscle, brain and leukocyte. Restricted expression in normal tissues, but widely expressed in cancer cells.

The protein resides in the cell membrane. It localises to the basolateral cell membrane. The protein localises to the cytoplasm. The enzyme catalyses pyruvate(out) + H(+)(out) = pyruvate(in) + H(+)(in). The catalysed reaction is 3-methyl-2-oxobutanoate(out) + H(+)(out) = 3-methyl-2-oxobutanoate(in) + H(+)(in). It catalyses the reaction (S)-lactate(in) + H(+)(in) = (S)-lactate(out) + H(+)(out). It carries out the reaction acetoacetate(out) + H(+)(out) = acetoacetate(in) + H(+)(in). The enzyme catalyses (R)-3-hydroxybutanoate(out) + H(+)(out) = (R)-3-hydroxybutanoate(in) + H(+)(in). The catalysed reaction is 4-methyl-2-oxopentanoate(out) + H(+)(out) = 4-methyl-2-oxopentanoate(in) + H(+)(in). It catalyses the reaction (S)-3-hydroxybutanoate(out) + H(+)(out) = (S)-3-hydroxybutanoate(in) + H(+)(in). With respect to regulation, transport activity exhibits steep dependence on substrate concentration. Substrate concentration sensitivity of SLC16A7 arises from the strong inter-subunit cooperativity of the SLC16A7 dimer during transport. Inhibited by AR-C155858. Proton-coupled monocarboxylate symporter. Catalyzes the rapid transport across the plasma membrane of monocarboxylates such as L-lactate, pyruvate and ketone bodies, acetoacetate, beta-hydroxybutyrate and acetate. Dimerization is functionally required and both subunits work cooperatively in transporting substrate. In Homo sapiens (Human), this protein is Monocarboxylate transporter 2.